Reading from the N-terminus, the 152-residue chain is MLP-like protein 165 (152 aa).

It belongs to the MLP family.

This chain is MLP-like protein 165 (MLP165), found in Arabidopsis thaliana (Mouse-ear cress).